A 100-amino-acid polypeptide reads, in one-letter code: Co-chaperonin GroES (100 aa).

This sequence belongs to the GroES chaperonin family. Heptamer of 7 subunits arranged in a ring. Interacts with the chaperonin GroEL.

It is found in the cytoplasm. In terms of biological role, together with the chaperonin GroEL, plays an essential role in assisting protein folding. The GroEL-GroES system forms a nano-cage that allows encapsulation of the non-native substrate proteins and provides a physical environment optimized to promote and accelerate protein folding. GroES binds to the apical surface of the GroEL ring, thereby capping the opening of the GroEL channel. The chain is Co-chaperonin GroES from Nocardia farcinica (strain IFM 10152).